The chain runs to 1114 residues: Kinesin-like protein KIN-12F (1114 aa).

The segment at methionine 1–arginine 84 is disordered. Composition is skewed to polar residues over residues leucine 10–aspartate 39 and proline 48–alanine 80. The Kinesin motor domain maps to histidine 104–methionine 436. Residue glycine 175–threonine 182 coordinates ATP. Coiled-coil stretches lie at residues glutamine 761 to aspartate 791, alanine 872 to alanine 942, and glutamate 1038 to glutamate 1081. The interval asparagine 1092 to methionine 1114 is disordered.

Belongs to the TRAFAC class myosin-kinesin ATPase superfamily. Kinesin family. KIN-12 subfamily.

The chain is Kinesin-like protein KIN-12F from Arabidopsis thaliana (Mouse-ear cress).